The primary structure comprises 98 residues: Large ribosomal subunit protein uL23 (98 aa).

It belongs to the universal ribosomal protein uL23 family. In terms of assembly, part of the 50S ribosomal subunit. Contacts protein L29, and trigger factor when it is bound to the ribosome.

Functionally, one of the early assembly proteins it binds 23S rRNA. One of the proteins that surrounds the polypeptide exit tunnel on the outside of the ribosome. Forms the main docking site for trigger factor binding to the ribosome. This chain is Large ribosomal subunit protein uL23, found in Nitrosococcus oceani (strain ATCC 19707 / BCRC 17464 / JCM 30415 / NCIMB 11848 / C-107).